A 360-amino-acid polypeptide reads, in one-letter code: Phospho-N-acetylmuramoyl-pentapeptide-transferase (360 aa).

The next 10 membrane-spanning stretches (helical) occupy residues 27–47 (GAMI…INSL), 71–91 (TPTM…LLWA), 93–113 (LASV…AIGF), 128–148 (FSGK…AFTI), 168–188 (LVIN…VGAG), 199–219 (GLAI…AYLS), 239–259 (LAVV…FNAP), 262–282 (AIFM…TVAV), 288–308 (IVLA…IIQV), and 337–357 (QVVI…LSTL).

The protein belongs to the glycosyltransferase 4 family. MraY subfamily. Mg(2+) serves as cofactor.

It localises to the cell inner membrane. The enzyme catalyses UDP-N-acetyl-alpha-D-muramoyl-L-alanyl-gamma-D-glutamyl-meso-2,6-diaminopimeloyl-D-alanyl-D-alanine + di-trans,octa-cis-undecaprenyl phosphate = di-trans,octa-cis-undecaprenyl diphospho-N-acetyl-alpha-D-muramoyl-L-alanyl-D-glutamyl-meso-2,6-diaminopimeloyl-D-alanyl-D-alanine + UMP. The protein operates within cell wall biogenesis; peptidoglycan biosynthesis. Its function is as follows. Catalyzes the initial step of the lipid cycle reactions in the biosynthesis of the cell wall peptidoglycan: transfers peptidoglycan precursor phospho-MurNAc-pentapeptide from UDP-MurNAc-pentapeptide onto the lipid carrier undecaprenyl phosphate, yielding undecaprenyl-pyrophosphoryl-MurNAc-pentapeptide, known as lipid I. This is Phospho-N-acetylmuramoyl-pentapeptide-transferase from Brucella ovis (strain ATCC 25840 / 63/290 / NCTC 10512).